The following is a 316-amino-acid chain: tRNA dimethylallyltransferase (316 aa).

13 to 20 (GPTAVGKT) provides a ligand contact to ATP. 15 to 20 (TAVGKT) is a binding site for substrate. Positions 38 to 41 (DSIQ) are interaction with substrate tRNA.

This sequence belongs to the IPP transferase family. In terms of assembly, monomer. Mg(2+) is required as a cofactor.

The catalysed reaction is adenosine(37) in tRNA + dimethylallyl diphosphate = N(6)-dimethylallyladenosine(37) in tRNA + diphosphate. Functionally, catalyzes the transfer of a dimethylallyl group onto the adenine at position 37 in tRNAs that read codons beginning with uridine, leading to the formation of N6-(dimethylallyl)adenosine (i(6)A). This Staphylococcus carnosus (strain TM300) protein is tRNA dimethylallyltransferase.